We begin with the raw amino-acid sequence, 136 residues long: Snaclec rhodocytin subunit alpha (136 aa).

3 disulfide bridges follow: C5-C16, C33-C131, and C106-C123. Residues 12-132 (YDQHCYQAFN…CEQMHAFVCK (121 aa)) form the C-type lectin domain.

This sequence belongs to the snaclec family. As to quaternary structure, dimer (non-covalently linked) of heterodimers of subunits alpha and beta (disulfide-linked). Expressed by the venom gland.

It localises to the secreted. Its function is as follows. Elicits platelet aggregation by the binding to the C-type lectin domain family 1 member B (CLEC1B/CLEC2). Binding leads to tyrosine phosphorylation in the cytoplasmic tail of CLEC1B, which promotes the binding of spleen tyrosine kinase (Syk), subsequent activation of PLC-gamma-2, and platelet activation and aggregation. Binding to GPIbalpha (GP1BA) and alpha-2/beta-1 (ITGA2/ITGB1) may also induce aggregation, but this is controversial. This is Snaclec rhodocytin subunit alpha from Calloselasma rhodostoma (Malayan pit viper).